A 354-amino-acid chain; its full sequence is Probable protein phosphatase 2C 69 (354 aa).

The region spanning 33–279 (SYGYASSAGK…DNITCVVVRF (247 aa)) is the PPM-type phosphatase domain. Positions 69, 70, 231, and 270 each coordinate Mn(2+). The disordered stretch occupies residues 289-354 (HISSSSSKEA…LERNSVTDKV (66 aa)). 2 stretches are compositionally biased toward polar residues: residues 309-328 (ISSN…PENV) and 336-348 (ASRS…LERN).

The protein belongs to the PP2C family. Mg(2+) serves as cofactor. The cofactor is Mn(2+).

It carries out the reaction O-phospho-L-seryl-[protein] + H2O = L-seryl-[protein] + phosphate. The enzyme catalyses O-phospho-L-threonyl-[protein] + H2O = L-threonyl-[protein] + phosphate. The sequence is that of Probable protein phosphatase 2C 69 from Arabidopsis thaliana (Mouse-ear cress).